The chain runs to 118 residues: Ribonuclease P protein component (118 aa).

Belongs to the RnpA family. As to quaternary structure, consists of a catalytic RNA component (M1 or rnpB) and a protein subunit.

The enzyme catalyses Endonucleolytic cleavage of RNA, removing 5'-extranucleotides from tRNA precursor.. Its function is as follows. RNaseP catalyzes the removal of the 5'-leader sequence from pre-tRNA to produce the mature 5'-terminus. It can also cleave other RNA substrates such as 4.5S RNA. The protein component plays an auxiliary but essential role in vivo by binding to the 5'-leader sequence and broadening the substrate specificity of the ribozyme. The protein is Ribonuclease P protein component of Rickettsia peacockii (strain Rustic).